The sequence spans 423 residues: Putative competence-damage inducible protein (423 aa).

The protein belongs to the CinA family.

This is Putative competence-damage inducible protein from Streptococcus pyogenes serotype M12 (strain MGAS2096).